Here is a 539-residue protein sequence, read N- to C-terminus: Putative cysteine ligase BshC (539 aa).

ADP is bound by residues serine 146 and 384 to 386 (ERH). A coiled-coil region spans residues 455–475 (LLKNAAFIQDQLQFLERTVMK). ADP contacts are provided by residues 490–493 (RIQN), tryptophan 506, and tyrosine 510.

The protein belongs to the BshC family. As to quaternary structure, homodimer in solution.

Involved in bacillithiol (BSH) biosynthesis. May catalyze the last step of the pathway, the addition of cysteine to glucosamine malate (GlcN-Mal) to generate BSH. This chain is Putative cysteine ligase BshC, found in Bacillus subtilis (strain 168).